The following is a 500-amino-acid chain: L-arabinose isomerase (500 aa).

Glutamate 306, glutamate 333, histidine 350, and histidine 450 together coordinate Mn(2+).

It belongs to the arabinose isomerase family. In terms of assembly, homohexamer. The cofactor is Mn(2+).

It carries out the reaction beta-L-arabinopyranose = L-ribulose. It functions in the pathway carbohydrate degradation; L-arabinose degradation via L-ribulose; D-xylulose 5-phosphate from L-arabinose (bacterial route): step 1/3. Functionally, catalyzes the conversion of L-arabinose to L-ribulose. This Salmonella enteritidis PT4 (strain P125109) protein is L-arabinose isomerase.